The primary structure comprises 670 residues: MVSFVIRDAEEKRHRNGVNALQLDPVNGRLYSAGRDAIIRVWNSTQTSSQEPYIQSMEHHNDWVNDIVLCCGGRNLISASCDTTVKVWNAHKGFCMSTLRTHRDYVQALAYAKDREQVASAGLDKAIFLWDVNTLTALTASNNTVTTSSITGSKDSIYSLAMNPSGTIIVSGSTENTLRIWDPRTCNKIAKLKGHTENVKALVVSEDGTQVVSGSSDGKIKLWSIGQQRCIQTISVHSEGVWALLMTDNFSHVISGSRDKKIVMTELRNPTNSVLICEERAPVLSLCYNIDQTGIWATTWNSDVRCWKLNKTDKLSNYSYSSNSSINSGGGGDGTPVTNSASNATPASAGKGYEVACIKGGAAIKKYHVLNDKRFMLTKDSEQNVAIYDVLKVKKVEDLGKVDYEEEIKKRSQRVHVPNWFTVDLKTGMPTIVLGQDEVDCFAAWVSAEAGLPEHAESGSDPKVNYGSLLLQALLEYWKPPPPHHHLQGGVPDMENGCDGDIRGNEYFIVPKHTPIIFSEVGGRNVCRLLVKDAAGETESALLSETVPSWVTNVVIERTIPKFIKLPFYLLAHPSMLKQDRSKKERLIANEFIQCRKVCEHVLEKVLGADLPGGGGGSSTGGGGNSNSSQNNSQSDANSEGSQVPAEERIELLCNDVNNEDYGKNIHLNT.

WD repeat units follow at residues 13–52 (RHRN…SQEP), 59–98 (HHND…CMST), 101–140 (THRD…ALTA), 152–191 (GSKD…KIAK), 194–233 (GHTE…CIQT), 236–275 (VHSE…NSVL), and 278–317 (EERA…KLSN). Residues 321–348 (SSNSSINSGGGGDGTPVTNSASNATPAS) form a disordered region. Over residues 338–348 (TNSASNATPAS) the composition is skewed to low complexity. A WD 8 repeat occupies 359–398 (KGGAAIKKYHVLNDKRFMLTKDSEQNVAIYDVLKVKKVED). The segment covering 613 to 625 (GGGGGSSTGGGGN) has biased composition (gly residues). Residues 613-645 (GGGGGSSTGGGGNSNSSQNNSQSDANSEGSQVP) form a disordered region. Residues 626–635 (SNSSQNNSQS) are compositionally biased toward low complexity.

It belongs to the WD repeat WDR48 family. Catalytic component of the Usp12-46 deubiquitylase complex consisting of Usp12-46, Wdr20 and Uaf1; regulatory subunit that, together wtih Wdr20, stabilizes Usp12-46. The Usp12-46 deubiquitylase complex associates with arr/arrow; the interaction leads to deubiquitination and stabilization of arr/arrow.

Regulatory component of the Usp12-46 deubiquitylase complex. activates deubiquitination by increasing the catalytic turnover without increasing the affinity of deubiquitinating enzymes for the substrate. The complex deubiquitylates the wg/wingless-signaling receptor arr/arrow, which stabilizes the receptor and increases its concentration at the cell surface; this enhances the sensitivity of cells to wg/wingless-signal stimulation. This increases the amplitude and spatial range of the signaling response to the wg/wingless morphogen gradient, facilitating the precise concentration-dependent regulation of its target genes. Together with Wdr20 and Usp12-46 required for wg/wingless-mediated signaling in the wing imaginal disc and for wg/wingless-dependent regulation of intestinal stem cell proliferation. The chain is WD repeat-containing protein 48 homolog from Culex quinquefasciatus (Southern house mosquito).